Here is a 229-residue protein sequence, read N- to C-terminus: MAAKPVLYYFNGRGKMESIRWLLAAAGVEFEEVFLETREQYEKLLQSGILMFQQVPMVEIDGMKLVQTRAILNYIAGKYNLYGKDLKERALIDMYVGGTDDLMGFLLSFPFLSAEDKVKQCAFVVEKATSRYFPAYEKVLKDHGQDFLVGNRLSWADIHLLEAILMVEEKKSDALSGFPLLQAFKKRISSIPTIKKFLAPGSKRKPISDDKYVETVRRVLRMYYDVKPH.

Blocked amino end (Ala) is present on Ala-2. A GST N-terminal domain is found at 3–83; that stretch reads AKPVLYYFNG…YIAGKYNLYG (81 aa). Glutathione is bound by residues Tyr-9, 54–55, and 67–68; these read QV and QT. The 123-residue stretch at 85-207 folds into the GST C-terminal domain; it reads DLKERALIDM…LAPGSKRKPI (123 aa).

This sequence belongs to the GST superfamily. Alpha family. Homodimer or heterodimer (with a subunit from group CL-4).

The protein localises to the cytoplasm. It catalyses the reaction RX + glutathione = an S-substituted glutathione + a halide anion + H(+). Functionally, catalyzes the conjugation of GSH to a wide variety of electrophilic alkylating agents. Also involved in the metabolism of lipid hydroperoxides, prostaglandins and leukotriene A4 and in binding of non-substrate hydrophobic ligands such as bile acids, a number of drugs and thyroid hormones. This GST does not exhibit peroxidase activity. The sequence is that of Glutathione S-transferase 3 from Gallus gallus (Chicken).